The chain runs to 313 residues: Thiamine thiazole synthase (313 aa).

Substrate contacts are provided by residues Ala-71, 92–93 (EA), Gly-100, and Val-165. Cys-199 is subject to 2,3-didehydroalanine (Cys). Substrate-binding positions include Asp-201, His-216, Met-268, and 278–280 (RMG).

This sequence belongs to the THI4 family. In terms of assembly, homooctamer. Fe cation serves as cofactor. During the catalytic reaction, a sulfide is transferred from Cys-199 to a reaction intermediate, generating a dehydroalanine residue.

Its subcellular location is the cytoplasm. The protein localises to the nucleus. The enzyme catalyses [ADP-thiazole synthase]-L-cysteine + glycine + NAD(+) = [ADP-thiazole synthase]-dehydroalanine + ADP-5-ethyl-4-methylthiazole-2-carboxylate + nicotinamide + 3 H2O + 2 H(+). Its function is as follows. Involved in biosynthesis of the thiamine precursor thiazole. Catalyzes the conversion of NAD and glycine to adenosine diphosphate 5-(2-hydroxyethyl)-4-methylthiazole-2-carboxylic acid (ADT), an adenylated thiazole intermediate. The reaction includes an iron-dependent sulfide transfer from a conserved cysteine residue of the protein to a thiazole intermediate. The enzyme can only undergo a single turnover, which suggests it is a suicide enzyme. May have additional roles in adaptation to various stress conditions and in DNA damage tolerance. The chain is Thiamine thiazole synthase from Coprinopsis cinerea (strain Okayama-7 / 130 / ATCC MYA-4618 / FGSC 9003) (Inky cap fungus).